We begin with the raw amino-acid sequence, 557 residues long: Urocanate hydratase (557 aa).

Positions 1-20 are disordered; the sequence is MSNPRHNEREVRSPRGDELN. NAD(+)-binding positions include 52–53, Gln130, 176–178, Glu196, Arg201, 242–243, 263–267, 273–274, and Tyr322; these read GG, GMG, NA, QTSAH, and YL. The active site involves Cys410. Gly492 lines the NAD(+) pocket.

Belongs to the urocanase family. It depends on NAD(+) as a cofactor.

Its subcellular location is the cytoplasm. The catalysed reaction is 4-imidazolone-5-propanoate = trans-urocanate + H2O. It functions in the pathway amino-acid degradation; L-histidine degradation into L-glutamate; N-formimidoyl-L-glutamate from L-histidine: step 2/3. Functionally, catalyzes the conversion of urocanate to 4-imidazolone-5-propionate. The chain is Urocanate hydratase from Brucella melitensis biotype 1 (strain ATCC 23456 / CCUG 17765 / NCTC 10094 / 16M).